The chain runs to 335 residues: Aspartate carbamoyltransferase catalytic subunit (335 aa).

Carbamoyl phosphate contacts are provided by Arg81 and Thr82. Lys109 is an L-aspartate binding site. Positions 131, 159, and 162 each coordinate carbamoyl phosphate. Arg192 and Arg246 together coordinate L-aspartate. Residues Gly287 and Pro288 each coordinate carbamoyl phosphate.

The protein belongs to the aspartate/ornithine carbamoyltransferase superfamily. ATCase family. In terms of assembly, heterododecamer (2C3:3R2) of six catalytic PyrB chains organized as two trimers (C3), and six regulatory PyrI chains organized as three dimers (R2).

The enzyme catalyses carbamoyl phosphate + L-aspartate = N-carbamoyl-L-aspartate + phosphate + H(+). Its pathway is pyrimidine metabolism; UMP biosynthesis via de novo pathway; (S)-dihydroorotate from bicarbonate: step 2/3. In terms of biological role, catalyzes the condensation of carbamoyl phosphate and aspartate to form carbamoyl aspartate and inorganic phosphate, the committed step in the de novo pyrimidine nucleotide biosynthesis pathway. The polypeptide is Aspartate carbamoyltransferase catalytic subunit (Caulobacter sp. (strain K31)).